Consider the following 240-residue polypeptide: Probable transcriptional regulator ycf27 (240 aa).

The 114-residue stretch at 5–118 folds into the Response regulatory domain; it reads KILVIDDEAS…ELEARIRSVL (114 aa). Asp54 carries the 4-aspartylphosphate modification. Residues 74–92 constitute a DNA-binding region (H-T-H motif); it reads DVPIIMLTALSDVSDRITG. Residues 133-234 constitute a DNA-binding region (ompR/PhoB-type); it reads SGIINIGFLK…ARGTGYLFQR (102 aa).

Its subcellular location is the plastid. It localises to the chloroplast. Functionally, probable promoter-specific protein mediating the interaction between DNA and RNA polymerase. In Porphyridium aerugineum (Red microalga), this protein is Probable transcriptional regulator ycf27 (ycf27).